Consider the following 710-residue polypeptide: NAD(P)H-quinone oxidoreductase subunit 5, chloroplastic (710 aa).

The next 17 helical transmembrane spans lie at 9–29 (WIIP…LLIF), 40–60 (WSFQ…YLSI), 89–109 (IDPL…LVLI), 125–145 (FTYM…SNFI), 147–167 (IYIF…FWFT), 185–205 (GDFG…SFEF), 221–241 (VNLL…IAKS), 258–278 (TPIS…FLVA), 280–300 (LLPL…IGII), 327–347 (LGYM…FHLI), 354–374 (ALLF…IGYS), 396–416 (GAFL…CFWS), 425–445 (WLYS…TAFY), 519–539 (MLFP…LGIP), 571–591 (FLKH…IAFL), 657–676 (SFDL…LSFI), and 689–709 (IPFY…LFYK).

Belongs to the complex I subunit 5 family. As to quaternary structure, NDH is composed of at least 16 different subunits, 5 of which are encoded in the nucleus.

The protein localises to the plastid. It localises to the chloroplast thylakoid membrane. It carries out the reaction a plastoquinone + NADH + (n+1) H(+)(in) = a plastoquinol + NAD(+) + n H(+)(out). It catalyses the reaction a plastoquinone + NADPH + (n+1) H(+)(in) = a plastoquinol + NADP(+) + n H(+)(out). NDH shuttles electrons from NAD(P)H:plastoquinone, via FMN and iron-sulfur (Fe-S) centers, to quinones in the photosynthetic chain and possibly in a chloroplast respiratory chain. The immediate electron acceptor for the enzyme in this species is believed to be plastoquinone. Couples the redox reaction to proton translocation, and thus conserves the redox energy in a proton gradient. This Ipomoea purpurea (Common morning glory) protein is NAD(P)H-quinone oxidoreductase subunit 5, chloroplastic (ndhF).